The sequence spans 207 residues: GTP cyclohydrolase 1 (207 aa).

Residues Cys-94, His-97, and Cys-167 each coordinate Zn(2+).

Belongs to the GTP cyclohydrolase I family. As to quaternary structure, toroid-shaped homodecamer, composed of two pentamers of five dimers.

The catalysed reaction is GTP + H2O = 7,8-dihydroneopterin 3'-triphosphate + formate + H(+). The protein operates within cofactor biosynthesis; 7,8-dihydroneopterin triphosphate biosynthesis; 7,8-dihydroneopterin triphosphate from GTP: step 1/1. In Thermobifida fusca (strain YX), this protein is GTP cyclohydrolase 1.